We begin with the raw amino-acid sequence, 137 residues long: Large ribosomal subunit protein uL22 (137 aa).

It belongs to the universal ribosomal protein uL22 family. As to quaternary structure, part of the 50S ribosomal subunit.

In terms of biological role, this protein binds specifically to 23S rRNA; its binding is stimulated by other ribosomal proteins, e.g. L4, L17, and L20. It is important during the early stages of 50S assembly. It makes multiple contacts with different domains of the 23S rRNA in the assembled 50S subunit and ribosome. Functionally, the globular domain of the protein is located near the polypeptide exit tunnel on the outside of the subunit, while an extended beta-hairpin is found that lines the wall of the exit tunnel in the center of the 70S ribosome. In Flavobacterium psychrophilum (strain ATCC 49511 / DSM 21280 / CIP 103535 / JIP02/86), this protein is Large ribosomal subunit protein uL22.